We begin with the raw amino-acid sequence, 368 residues long: Homoserine O-acetyltransferase (368 aa).

An AB hydrolase-1 domain is found at 43–354 (NVVVVCHALT…DYGHDAFLVE (312 aa)). Serine 148 functions as the Nucleophile in the catalytic mechanism. A substrate-binding site is contributed by arginine 220. Residues aspartate 314 and histidine 348 contribute to the active site. Residue aspartate 349 coordinates substrate.

This sequence belongs to the AB hydrolase superfamily. MetX family. Homodimer.

The protein resides in the cytoplasm. The catalysed reaction is L-homoserine + acetyl-CoA = O-acetyl-L-homoserine + CoA. It functions in the pathway amino-acid biosynthesis; L-methionine biosynthesis via de novo pathway; O-acetyl-L-homoserine from L-homoserine: step 1/1. Transfers an acetyl group from acetyl-CoA to L-homoserine, forming acetyl-L-homoserine. This chain is Homoserine O-acetyltransferase, found in Sulfurimonas autotrophica (strain ATCC BAA-671 / DSM 16294 / JCM 11897 / OK10).